The following is a 339-amino-acid chain: MNDTFLKACRGEKTDYTPIWMMRQAGRYLPAYQKIRGKVSFLELCKNPALCVEVTLQPVDLLGMDAAILFSDILILMEAMGAKLEFNEGCGPVFPNPIKDQTALDALIIPDADDATGFVMETIRLLRGELQVPLIGFAGAPFTCATYLIEGGSSKVFWETKKMMFTQPELFHGIMEKITQATILYLQAQARAGAQALQIFDSWAGVLAPCDFEVFALPYVRRIIASLQQFDLPIIYFANNGSTLLEMSASSGASVLGLDWRINIGDAGKRVPGIALQGNIDPFALLLPKDKLRKRIGTILEDAKEVKGHIFNLGHGIHQFTPPEQARIAVDAVHELSCK.

Substrate-binding positions include 23–27, Asp-72, Tyr-147, Ser-202, and His-315; that span reads RQAGR.

This sequence belongs to the uroporphyrinogen decarboxylase family. As to quaternary structure, homodimer.

The protein localises to the cytoplasm. It catalyses the reaction uroporphyrinogen III + 4 H(+) = coproporphyrinogen III + 4 CO2. The protein operates within porphyrin-containing compound metabolism; protoporphyrin-IX biosynthesis; coproporphyrinogen-III from 5-aminolevulinate: step 4/4. Functionally, catalyzes the decarboxylation of four acetate groups of uroporphyrinogen-III to yield coproporphyrinogen-III. This chain is Uroporphyrinogen decarboxylase, found in Desulfotalea psychrophila (strain LSv54 / DSM 12343).